Consider the following 73-residue polypeptide: Crustacean hyperglycemic hormone (73 aa).

Disulfide bonds link cysteine 7/cysteine 43, cysteine 23/cysteine 39, and cysteine 26/cysteine 52. The residue at position 73 (valine 73) is a Valine amide.

This sequence belongs to the arthropod CHH/MIH/GIH/VIH hormone family. In terms of tissue distribution, produced by the medulla terminalis X-organ in the eyestalks and transported to the sinus gland where they are stored and released.

The protein resides in the secreted. In terms of biological role, hormone found in the sinus gland of isopods and decapods which controls the blood sugar level. Has a secretagogue action over the amylase released from the midgut gland. May act as a stress hormone and may be involved in the control of molting and reproduction. This Jasus lalandii (Cape rock lobster) protein is Crustacean hyperglycemic hormone.